A 271-amino-acid polypeptide reads, in one-letter code: Thiazole synthase (271 aa).

Residue K95 is the Schiff-base intermediate with DXP of the active site. 1-deoxy-D-xylulose 5-phosphate contacts are provided by residues G156, 182-183 (AG), and 204-205 (NT).

It belongs to the ThiG family. In terms of assembly, homotetramer. Forms heterodimers with either ThiH or ThiS.

Its subcellular location is the cytoplasm. It carries out the reaction [ThiS sulfur-carrier protein]-C-terminal-Gly-aminoethanethioate + 2-iminoacetate + 1-deoxy-D-xylulose 5-phosphate = [ThiS sulfur-carrier protein]-C-terminal Gly-Gly + 2-[(2R,5Z)-2-carboxy-4-methylthiazol-5(2H)-ylidene]ethyl phosphate + 2 H2O + H(+). It functions in the pathway cofactor biosynthesis; thiamine diphosphate biosynthesis. Functionally, catalyzes the rearrangement of 1-deoxy-D-xylulose 5-phosphate (DXP) to produce the thiazole phosphate moiety of thiamine. Sulfur is provided by the thiocarboxylate moiety of the carrier protein ThiS. In vitro, sulfur can be provided by H(2)S. The protein is Thiazole synthase of Yersinia pseudotuberculosis serotype O:1b (strain IP 31758).